A 776-amino-acid chain; its full sequence is MQHFSRTFLAASIATALFAPYAQAEAILNNSVQEMPTTDQCLVDAEKNDANAEIVIQADNLQAINGDKAIYSGDVEVTQGNKKITAESVTLHQQENIVVAEGNVTFNDGEVKASSSKVTNNMTSETFSLENTEYQFLCQQGRGQAAYIAKTGQAVYELEDGSITSCPADDNAWRLVASSIEVDQDEETATFYHPRFEVLDVPVFYAPYLTLPIGNTRKTGFLFPSVNYGSSDGLEIEVPFYWNIAPNYDLTLTTLYMQQRGVKQDADFRYLSDGWGSGELKGEYLPGDEKYNDEDRWGYQYKHDGIINKQWLVSLDYSQVSDIDYFRDLSSDLGNREDGQLMQQGKVAYRSDFWDMSLQVRDFQILLQDNNQPYRLLPQVKFNFYTPLLGNYLNFDVKSELTQFDIQDASKPNALRAHVEPGLTIPLSTSWATWTTEARLLATYYQQDLDRLTDPTLKSQLDETVARVIPEYRSHARIYLEREAKLFEGYTQSLEPQIQYLYVPEEEQGNIYNYDTTLLQTDYYGLFRSRKYSSIDKIAAANQLSYGASTRFFDDEYKERLNISFGQIYYIDKKTKLTGNQEETSNYSSWAVETDFNYEDFLFYHGGIQYDIDLNAMQLANSTLEYQFTDGFIQGNYRYVTKDYIEDTISFDELDKITRKGISQAGIVGAYNINRHWSASGQYYYDLTEEIDLEWMASLRYQSDCWYIGFTYTNQLVKWRNDVVGGDSNNPVYDTNISVNFGIQGFATKNKAETAAKELDSTDNAITYGRPFYLNN.

The N-terminal stretch at 1 to 24 is a signal peptide; sequence MQHFSRTFLAASIATALFAPYAQA.

It belongs to the LptD family. In terms of assembly, component of the lipopolysaccharide transport and assembly complex. Interacts with LptE and LptA.

The protein resides in the cell outer membrane. In terms of biological role, together with LptE, is involved in the assembly of lipopolysaccharide (LPS) at the surface of the outer membrane. The sequence is that of LPS-assembly protein LptD from Vibrio vulnificus (strain YJ016).